A 204-amino-acid polypeptide reads, in one-letter code: Small ribosomal subunit protein uS4 (204 aa).

The region spanning 92-157 (RRLDALVLRS…KPLFEVAREG (66 aa)) is the S4 RNA-binding domain.

This sequence belongs to the universal ribosomal protein uS4 family. As to quaternary structure, part of the 30S ribosomal subunit. Contacts protein S5. The interaction surface between S4 and S5 is involved in control of translational fidelity.

In terms of biological role, one of the primary rRNA binding proteins, it binds directly to 16S rRNA where it nucleates assembly of the body of the 30S subunit. Functionally, with S5 and S12 plays an important role in translational accuracy. This chain is Small ribosomal subunit protein uS4, found in Streptomyces avermitilis (strain ATCC 31267 / DSM 46492 / JCM 5070 / NBRC 14893 / NCIMB 12804 / NRRL 8165 / MA-4680).